Here is a 498-residue protein sequence, read N- to C-terminus: ADP,ATP carrier protein 1 (498 aa).

Residues 1–33 (MSTTKSDNYISELRKVIWPIERYENKKFLPMAF) lie on the Cytoplasmic side of the membrane. A helical transmembrane segment spans residues 34–54 (MMFCILLNYSTLRSIKDGFVV). A disulfide bond links C37 and C85. At 55 to 67 (TDIGAEAISFLKT) the chain is on the extracellular side. The helical transmembrane segment at 68 to 88 (YIVLPSAVIAMIVYVKLCDIL) threads the bilayer. Residues 89 to 92 (KQEN) are Cytoplasmic-facing. A helical membrane pass occupies residues 93–113 (VFYVITSFFLAYFALFAFVLY). Topologically, residues 114–147 (PNPDLVHPNPEAIESLSLAYPNFKWFIRIVGKWS) are extracellular. The chain crosses the membrane as a helical span at residues 148-168 (FASFYTMAELWGTLMLSLLFW). Residues 169–184 (QFANQITKTDEAKRFY) are Cytoplasmic-facing. The helical transmembrane segment at 185 to 205 (SMFGLLANLALPVTSLIIGYF) threads the bilayer. Residues 206-218 (LHEKTQIVAEHLK) are Extracellular-facing. Residues 219 to 239 (FTPLFVIMIISSLAVILTYRW) traverse the membrane as a helical segment. Topologically, residues 240–279 (MNKNVLTDPKLYDPALVKGKKAKAKMSLIESFKMIFTSKY) are cytoplasmic. A helical membrane pass occupies residues 280–300 (VGYIALLLIAYGISVNLVEGV). At 301–320 (WKSKLKELHPTKEAYTMYMG) the chain is on the extracellular side. Residues 321-341 (QFQAYQGWVAIAFMIIGSNIL) traverse the membrane as a helical segment. The Cytoplasmic segment spans residues 342–348 (RKVSWLT). A helical membrane pass occupies residues 349 to 369 (AAMITPLMMLITGIAFFAFIF). The Extracellular segment spans residues 370 to 379 (FDSVIAMYLT). A helical membrane pass occupies residues 380 to 400 (GILASGPLALAVMIGTIQNVL). Over 401–438 (SKGVKYSLFDATKNMAYIPLDKDLRVKGQAAVEVIGGR) the chain is Cytoplasmic. 436 to 442 (GGRFGKS) serves as a coordination point for ATP. A helical transmembrane segment spans residues 439-459 (FGKSGGAIIQSTFFIIFPALG). Residues 460-465 (FVEATP) lie on the Extracellular side of the membrane. Residues 466 to 486 (YFASIFFVIVILWIYAVKGLN) traverse the membrane as a helical segment. Topologically, residues 487–498 (KEYQVLVNNTEK) are cytoplasmic.

This sequence belongs to the ADP/ATP translocase tlc family.

The protein localises to the cell membrane. Provides the rickettsial cell with host ATP in exchange for rickettsial ADP. This is an obligate exchange system. This energy acquiring activity is an important component of rickettsial parasitism. In Rickettsia bellii (strain RML369-C), this protein is ADP,ATP carrier protein 1 (tlcA).